Here is an 81-residue protein sequence, read N- to C-terminus: Putative membrane protein insertion efficiency factor (81 aa).

This sequence belongs to the UPF0161 family.

Its subcellular location is the cell inner membrane. In terms of biological role, could be involved in insertion of integral membrane proteins into the membrane. The sequence is that of Putative membrane protein insertion efficiency factor from Legionella pneumophila subsp. pneumophila (strain Philadelphia 1 / ATCC 33152 / DSM 7513).